Reading from the N-terminus, the 203-residue chain is Nudix hydrolase 12, mitochondrial (203 aa).

Residues 18 to 166 (NFRLVSGCIP…WMQRALEEFL (149 aa)) form the Nudix hydrolase domain. Positions 66 to 87 (GGWEDDETVLEAASREAIEEAG) match the Nudix box motif. Mg(2+)-binding residues include E81 and E85.

The protein belongs to the Nudix hydrolase family. Requires Mg(2+) as cofactor. It depends on Mn(2+) as a cofactor. In terms of tissue distribution, expressed in roots, leaves, stems and inflorescences.

The protein localises to the mitochondrion. Its function is as follows. Probably mediates the hydrolysis of some nucleoside diphosphate derivatives. In Arabidopsis thaliana (Mouse-ear cress), this protein is Nudix hydrolase 12, mitochondrial (NUDT12).